The following is an 83-amino-acid chain: Putative beta-neurotoxin RjAa12f (83 aa).

The N-terminal stretch at 1-18 is a signal peptide; that stretch reads MKILIFIIASFMLIGVEC. The 64-residue stretch at 19–82 folds into the LCN-type CS-alpha/beta domain; that stretch reads KEGYPMGRDG…VWDSSTNKCG (64 aa). Disulfide bonds link C29–C81, C33–C55, C40–C62, and C44–C64. Residue G83 is a propeptide.

In terms of processing, contains 4 disulfide bonds. As to expression, expressed by the venom gland.

The protein localises to the secreted. Beta toxins bind voltage-independently at site-4 of sodium channels (Nav) and shift the voltage of activation toward more negative potentials thereby affecting sodium channel activation and promoting spontaneous and repetitive firing. This toxin is lethal to insects (A.domestica). It is not toxic to mice and does not affect mammal F11 sodium channels. The chain is Putative beta-neurotoxin RjAa12f from Rhopalurus junceus (Caribbean blue scorpion).